A 748-amino-acid polypeptide reads, in one-letter code: E3 ubiquitin-protein ligase SMURF2 (748 aa).

The C2 domain maps to 1-119 (MSNPGGRRNG…TGYQRLDLCK (119 aa)). K119 is covalently cross-linked (Glycyl lysine isopeptide (Lys-Gly) (interchain with G-Cter in ubiquitin)). 3 consecutive WW domains span residues 157 to 190 (NDLP…RPTR), 251 to 284 (PDLP…DPRV), and 297 to 330 (GPLP…DPRL). The HECT domain maps to 414–748 (RPKDLWKRLM…IEETCGFAVE (335 aa)). C716 serves as the catalytic Glycyl thioester intermediate.

In terms of assembly, interacts (via WW domains) with SMAD1. Interacts (via WW domains) with SMAD2 (via PY-motif). Interacts (via WW domains) with SMAD3 (via PY-motif). Interacts with SMAD6. Interacts with SMAD7 (via PY-motif) and TGFBR1; SMAD7 recruits SMURF2 to the TGF-beta receptor and regulates its degradation. Does not interact with SMAD4; SMAD4 lacks a PY-motif. Interacts with AIMP1. Interacts with NDFIP1 and NDFIP2; this interaction activates the E3 ubiquitin-protein ligase. Interacts with TTC3. In terms of processing, auto-ubiquitinated and ubiquitinated in the presence of RNF11 and UBE2D1. Ubiquitinated by the SCF(FBXL15) complex and TTC3, leading to its degradation by the proteasome. 'Lys-48'-linked polyubiquitination mediated by TRAF4 at Lys-119 leads to SMURF2 proteasomal degradation.

The protein resides in the nucleus. It is found in the cytoplasm. The protein localises to the cell membrane. It localises to the membrane raft. The enzyme catalyses S-ubiquitinyl-[E2 ubiquitin-conjugating enzyme]-L-cysteine + [acceptor protein]-L-lysine = [E2 ubiquitin-conjugating enzyme]-L-cysteine + N(6)-ubiquitinyl-[acceptor protein]-L-lysine.. Its pathway is protein modification; protein ubiquitination. Activated by NDFIP1- and NDFIP2-binding. In terms of biological role, E3 ubiquitin-protein ligase which accepts ubiquitin from an E2 ubiquitin-conjugating enzyme in the form of a thioester and then directly transfers the ubiquitin to targeted substrates. Interacts with SMAD7 to trigger SMAD7-mediated transforming growth factor beta/TGF-beta receptor ubiquitin-dependent degradation, thereby down-regulating TGF-beta signaling. In addition, interaction with SMAD7 activates autocatalytic degradation, which is prevented by interaction with AIMP1. Also forms a stable complex with TGF-beta receptor-mediated phosphorylated SMAD1, SMAD2 and SMAD3, and targets SMAD1 and SMAD2 for ubiquitination and proteasome-mediated degradation. SMAD2 may recruit substrates, such as SNON, for ubiquitin-dependent degradation. Negatively regulates TGFB1-induced epithelial-mesenchymal transition and myofibroblast differentiation. The polypeptide is E3 ubiquitin-protein ligase SMURF2 (Mus musculus (Mouse)).